A 402-amino-acid chain; its full sequence is Bone morphogenetic protein 8A (402 aa).

A signal peptide spans 1–19 (MAARPGPLWLLGLTLCALG). A propeptide spanning residues 20–263 (GGGPGLRPPP…ASPSPIRTPR (244 aa)) is cleaved from the precursor. N-linked (GlcNAc...) asparagine glycosylation is found at asparagine 158 and asparagine 343. Cystine bridges form between cysteine 301/cysteine 367, cysteine 330/cysteine 399, and cysteine 334/cysteine 401.

It belongs to the TGF-beta family. In terms of assembly, homodimer; disulfide-linked.

It is found in the secreted. Induces cartilage and bone formation. May be the osteoinductive factor responsible for the phenomenon of epithelial osteogenesis. Plays a role in calcium regulation and bone homeostasis. Signaling protein involved in regulation of thermogenesis and energy balance. Proposed to increase the peripheral response of brown adipose tissue (BAT) to adrenergic stimulation while acting centrally in the hypothalamus to increase sympathetic output to BAT. Its function is as follows. Growth factor of the TGF-beta superfamily that plays important role in various biological processes, including spermatogenesis, osteogenesis, steroidogenesis as well as regulation of energy balance. Initiates the canonical BMP signaling cascade by associating with type I receptor BMPR1A and type II receptor BMPR2. Once all three components are bound together in a complex at the cell surface, BMPR2 phosphorylates and activates BMPR1A. In turn, BMPR1A propagates signal by phosphorylating SMAD1/5/8 that travel to the nucleus and act as activators and repressors of transcription of target genes. In addition, activates the SMAD2/3 pathway. The sequence is that of Bone morphogenetic protein 8A (BMP8A) from Homo sapiens (Human).